The primary structure comprises 137 residues: Putative FERT-1 protein (137 aa).

In Ascaris suum (Pig roundworm), this protein is Putative FERT-1 protein (FERT-1).